The chain runs to 126 residues: Heterotrimeric G protein gamma subunit GPG1 (126 aa).

G proteins are composed of 3 units, alpha, beta and gamma. GPG1 interacts with the beta subunits GBP1 and GPB2.

It is found in the cytoplasm. Its function is as follows. Gamma subunit of a guanine nucleotide-binding protein (G protein). G proteins are involved as modulators or transducers in various transmembrane signaling systems. The beta and gamma chains are required for the GTPase activity, for replacement of GDP by GTP, and for G protein-effector interaction. Involved in the determination of the cAMP level according to nutritional conditions, most probably as a regulator of cAMP phosphodiesterase. Required for the control of pseudohyphal and haploid invasive growth. This Saccharomyces cerevisiae (strain ATCC 204508 / S288c) (Baker's yeast) protein is Heterotrimeric G protein gamma subunit GPG1 (GPG1).